The sequence spans 130 residues: Large ribosomal subunit protein bL12 (130 aa).

It belongs to the bacterial ribosomal protein bL12 family. Homodimer. Part of the ribosomal stalk of the 50S ribosomal subunit. Forms a multimeric L10(L12)X complex, where L10 forms an elongated spine to which 2 to 4 L12 dimers bind in a sequential fashion. Binds GTP-bound translation factors.

Functionally, forms part of the ribosomal stalk which helps the ribosome interact with GTP-bound translation factors. Is thus essential for accurate translation. This is Large ribosomal subunit protein bL12 from Synechococcus sp. (strain WH7803).